Consider the following 255-residue polypeptide: tRNA (guanine-N(1)-)-methyltransferase (255 aa).

S-adenosyl-L-methionine-binding positions include glycine 113 and 133–138 (IGDYVL).

This sequence belongs to the RNA methyltransferase TrmD family. As to quaternary structure, homodimer.

The protein resides in the cytoplasm. It catalyses the reaction guanosine(37) in tRNA + S-adenosyl-L-methionine = N(1)-methylguanosine(37) in tRNA + S-adenosyl-L-homocysteine + H(+). Specifically methylates guanosine-37 in various tRNAs. The chain is tRNA (guanine-N(1)-)-methyltransferase from Escherichia coli O6:K15:H31 (strain 536 / UPEC).